Consider the following 439-residue polypeptide: Proton pump-interactor 4 (439 aa).

Residues 286–354 (KEEKEIDEET…AKKKKAVCKS (69 aa)) are a coiled coil. Residues 415-435 (LWVWTVSSAAVALPLALLVVF) form a helical membrane-spanning segment.

This sequence belongs to the plant Proton pump-interactor protein family.

The protein resides in the cell membrane. The protein localises to the endoplasmic reticulum membrane. Functionally, may regulate plasma membrane ATPase activity. In Arabidopsis thaliana (Mouse-ear cress), this protein is Proton pump-interactor 4 (PPI4).